We begin with the raw amino-acid sequence, 683 residues long: UvrABC system protein B (683 aa).

Residues 1 to 29 (MTDTGPLQPDRPDLDRPLSVDAPFEPAGD) form a disordered region. One can recognise a Helicase ATP-binding domain in the interval 39-417 (AGFESGAEKQ…PGDYERDHSE (379 aa)). 52–59 (GVTGSGKT) is a binding site for ATP. Residues 105–128 (YYDYYQPEAYVEQTDTYIDKDMSI) carry the Beta-hairpin motif. Positions 442–604 (QVEDLIERIQ…EPRTIEKPVS (163 aa)) constitute a Helicase C-terminal domain. Positions 587-603 (EFNAEHGHEPRTIEKPV) are enriched in basic and acidic residues. The disordered stretch occupies residues 587–620 (EFNAEHGHEPRTIEKPVSETNLPGSSTDTDGVAD). Positions 604–615 (SETNLPGSSTDT) are enriched in polar residues. In terms of domain architecture, UVR spans 630–665 (EQLIERLETRMQEAADNLEFELAADIRDRIRELRET).

Belongs to the UvrB family. Forms a heterotetramer with UvrA during the search for lesions. Interacts with UvrC in an incision complex.

Its subcellular location is the cytoplasm. Functionally, the UvrABC repair system catalyzes the recognition and processing of DNA lesions. A damage recognition complex composed of 2 UvrA and 2 UvrB subunits scans DNA for abnormalities. Upon binding of the UvrA(2)B(2) complex to a putative damaged site, the DNA wraps around one UvrB monomer. DNA wrap is dependent on ATP binding by UvrB and probably causes local melting of the DNA helix, facilitating insertion of UvrB beta-hairpin between the DNA strands. Then UvrB probes one DNA strand for the presence of a lesion. If a lesion is found the UvrA subunits dissociate and the UvrB-DNA preincision complex is formed. This complex is subsequently bound by UvrC and the second UvrB is released. If no lesion is found, the DNA wraps around the other UvrB subunit that will check the other stand for damage. In Natronomonas pharaonis (strain ATCC 35678 / DSM 2160 / CIP 103997 / JCM 8858 / NBRC 14720 / NCIMB 2260 / Gabara) (Halobacterium pharaonis), this protein is UvrABC system protein B.